A 163-amino-acid polypeptide reads, in one-letter code: Peptidyl-prolyl cis-trans isomerase FKBP15-2 (163 aa).

An N-terminal signal peptide occupies residues 1–25 (MASKMSLRYSLFLIFFSLISLQGFA). In terms of domain architecture, PPIase FKBP-type spans 52 to 140 (GDTIKVHYRG…IFDTELIAVN (89 aa)). The disordered stretch occupies residues 142–163 (KPAGGEEYGGDEDDEGYGNDEL). Over residues 149–163 (YGGDEDDEGYGNDEL) the composition is skewed to acidic residues. Residues 160-163 (NDEL) carry the Prevents secretion from ER motif.

It belongs to the FKBP-type PPIase family.

Its subcellular location is the endoplasmic reticulum lumen. It catalyses the reaction [protein]-peptidylproline (omega=180) = [protein]-peptidylproline (omega=0). Functionally, PPIases accelerate the folding of proteins. It catalyzes the cis-trans isomerization of proline imidic peptide bonds in oligopeptides. The polypeptide is Peptidyl-prolyl cis-trans isomerase FKBP15-2 (FKBP15-2) (Arabidopsis thaliana (Mouse-ear cress)).